Consider the following 395-residue polypeptide: GPI-anchor transamidase (395 aa).

The signal sequence occupies residues 1–27 (MVGTWFLCRGFTTLAGLLLLPFGSLAA). At 28 to 368 (SQIEDQAEQF…PKLKDWHPPG (341 aa)) the chain is on the lumenal side. Ca(2+)-binding residues include Asp79, Ile82, Glu118, and Asp120. His164 functions as the Proton donor in the catalytic mechanism. Cys206 (nucleophile; acyl-thioester intermediate) is an active-site residue. A protein is bound by residues Cys206, Ser232, and Ser234. Positions 231 to 236 (DSLSHQ) are autoinhibitory loop. Cys275 and Cys280 are oxidised to a cystine. A helical transmembrane segment spans residues 369–385 (GFILGLWALIIMVFFKT). Over 386 to 395 (YGIKHMKFIF) the chain is Cytoplasmic.

Belongs to the peptidase C13 family. As to quaternary structure, heteropentamer. Part of the GPI-anchor transamidase complex, consisting of PIGK, PIGT, PIGS, PIGU and GAA1. Interacts with GPAA1. Interacts with PIGT; this interaction, via a disulfide link, stabilizes the expression of GAA1 and PIGK and links them to PIGS. Post-translationally, the disulfide bond between PIGK/GPI8 and PIGT is important for normal enzyme activity.

The protein resides in the endoplasmic reticulum membrane. The protein operates within glycolipid biosynthesis; glycosylphosphatidylinositol-anchor biosynthesis. Its activity is regulated as follows. In the absence of proproteins substrates, exists in an inactive state with a disrupted catalytic site by an autoinhibitory loop. The binding of proprotein substrates, particularly the CSP region, to GPI-T triggers concerted conformational changes that alleviate the inhibition by the autoinhibitory loop. Meanwhile, proprotein residues near the omega- site induce the formation of a catalytic cleft for catalysis, following which the products are released and GPI-T reverts to the inactive state. Catalytic subunit of the glycosylphosphatidylinositol-anchor (GPI-anchor) transamidase (GPI-T) complex that catalyzes the formation of the linkage between a proprotein and a GPI-anchor and participates in GPI anchored protein biosynthesis. Recognizes diverse proproteins at a C-terminal signal peptide (CSP) region that lacks consensus sequence and replaces it with a GPI-anchor via a transamidation reaction. Transamidation catalysis reaction follows a two-phase mechanism. In the acyl-enzyme phase, the carbonyl group of the proproteins's omega-site undergoes a nucleophilic attack forming an enzyme-substrate thioester bond. Followed by a general acid catalysis that allows CSP releasing, regenerating the carbonyl, and forming the acyl-enzyme intermediate. In the GPI-anchor attachment phase, the amino group of the GPI-anchor's ethanolamine phosphate, the one on third mannose (EtNP3), mediates a nucleophilic attack on the carbonyl of the acyl-enzyme intermediate, replacing the CSP, allowing GPI-anchor attachment to the omega-residue, therefore forming the product and freeing the enzyme. The sequence is that of GPI-anchor transamidase from Sus scrofa (Pig).